A 110-amino-acid polypeptide reads, in one-letter code: Nucleoid-associated protein Tola_2216 (110 aa).

The protein belongs to the YbaB/EbfC family. In terms of assembly, homodimer.

The protein resides in the cytoplasm. Its subcellular location is the nucleoid. Its function is as follows. Binds to DNA and alters its conformation. May be involved in regulation of gene expression, nucleoid organization and DNA protection. The sequence is that of Nucleoid-associated protein Tola_2216 from Tolumonas auensis (strain DSM 9187 / NBRC 110442 / TA 4).